The primary structure comprises 378 residues: Chorismate synthase (378 aa).

The interval 42–61 is disordered; the sequence is IQAELDRRRPGQSPITTPRQ. R49 contributes to the NADP(+) binding site. FMN is bound by residues 126–128, G287, 302–306, and R328; these read RAS and KPTAT.

Belongs to the chorismate synthase family. Homotetramer. FMNH2 serves as cofactor.

It carries out the reaction 5-O-(1-carboxyvinyl)-3-phosphoshikimate = chorismate + phosphate. The protein operates within metabolic intermediate biosynthesis; chorismate biosynthesis; chorismate from D-erythrose 4-phosphate and phosphoenolpyruvate: step 7/7. In terms of biological role, catalyzes the anti-1,4-elimination of the C-3 phosphate and the C-6 proR hydrogen from 5-enolpyruvylshikimate-3-phosphate (EPSP) to yield chorismate, which is the branch point compound that serves as the starting substrate for the three terminal pathways of aromatic amino acid biosynthesis. This reaction introduces a second double bond into the aromatic ring system. This Synechococcus sp. (strain JA-2-3B'a(2-13)) (Cyanobacteria bacterium Yellowstone B-Prime) protein is Chorismate synthase.